The chain runs to 375 residues: Trichodiene synthase (375 aa).

Belongs to the trichodiene synthase family.

The enzyme catalyses (2E,6E)-farnesyl diphosphate = trichodiene + diphosphate. Its pathway is sesquiterpene biosynthesis; trichothecene biosynthesis. Functionally, TS is a member of the terpene cyclase group of enzymes. It catalyzes the isomerization and cyclization of farnesyl pyro-phosphate to form trichodiene, the first cyclic intermediate in the biosynthetic pathway for trichothecenes. It serves to branch trichothecene biosynthesis from the isoprenoid pathway. In Gibberella zeae (strain ATCC MYA-4620 / CBS 123657 / FGSC 9075 / NRRL 31084 / PH-1) (Wheat head blight fungus), this protein is Trichodiene synthase (TRI5).